A 238-amino-acid polypeptide reads, in one-letter code: ATP synthase subunit a (238 aa).

The next 5 helical transmembrane spans lie at 18–38 (LTLLAVCIVTIAVIFAFVFWA), 76–96 (YSLLLFTIFLFVAVANNLGLF), 114–134 (NLAFDLALSLFITLMVHIEGV), 166–186 (SLAIRLFGNIFAGEVVTGLIV), and 193–213 (VYWWPIAFLVNMAWTAFSVFI).

It belongs to the ATPase A chain family. As to quaternary structure, F-type ATPases have 2 components, CF(1) - the catalytic core - and CF(0) - the membrane proton channel. CF(1) has five subunits: alpha(3), beta(3), gamma(1), delta(1), epsilon(1). CF(0) has three main subunits: a(1), b(2) and c(9-12). The alpha and beta chains form an alternating ring which encloses part of the gamma chain. CF(1) is attached to CF(0) by a central stalk formed by the gamma and epsilon chains, while a peripheral stalk is formed by the delta and b chains.

It localises to the cell membrane. In terms of biological role, key component of the proton channel; it plays a direct role in the translocation of protons across the membrane. This Streptococcus pyogenes serotype M5 (strain Manfredo) protein is ATP synthase subunit a.